The primary structure comprises 211 residues: Large ribosomal subunit protein uL3 (211 aa).

This sequence belongs to the universal ribosomal protein uL3 family. Part of the 50S ribosomal subunit. Forms a cluster with proteins L14 and L19.

Its function is as follows. One of the primary rRNA binding proteins, it binds directly near the 3'-end of the 23S rRNA, where it nucleates assembly of the 50S subunit. This Halothermothrix orenii (strain H 168 / OCM 544 / DSM 9562) protein is Large ribosomal subunit protein uL3.